A 350-amino-acid polypeptide reads, in one-letter code: Biotin synthase (350 aa).

The Radical SAM core domain maps to asparagine 41–arginine 268. Residues cysteine 56, cysteine 60, and cysteine 63 each contribute to the [4Fe-4S] cluster site. Cysteine 100, cysteine 131, cysteine 191, and arginine 263 together coordinate [2Fe-2S] cluster.

Belongs to the radical SAM superfamily. Biotin synthase family. In terms of assembly, homodimer. Requires [4Fe-4S] cluster as cofactor. It depends on [2Fe-2S] cluster as a cofactor.

It catalyses the reaction (4R,5S)-dethiobiotin + (sulfur carrier)-SH + 2 reduced [2Fe-2S]-[ferredoxin] + 2 S-adenosyl-L-methionine = (sulfur carrier)-H + biotin + 2 5'-deoxyadenosine + 2 L-methionine + 2 oxidized [2Fe-2S]-[ferredoxin]. Its pathway is cofactor biosynthesis; biotin biosynthesis; biotin from 7,8-diaminononanoate: step 2/2. In terms of biological role, catalyzes the conversion of dethiobiotin (DTB) to biotin by the insertion of a sulfur atom into dethiobiotin via a radical-based mechanism. The sequence is that of Biotin synthase from Shewanella sp. (strain ANA-3).